The following is a 132-amino-acid chain: Small ribosomal subunit protein uS19 (132 aa).

The protein belongs to the universal ribosomal protein uS19 family.

In terms of biological role, protein S19 forms a complex with S13 that binds strongly to the 16S ribosomal RNA. This Korarchaeum cryptofilum (strain OPF8) protein is Small ribosomal subunit protein uS19.